An 81-amino-acid polypeptide reads, in one-letter code: Short neurotoxin 1 (81 aa).

Positions 1-21 (MKTLLLTLVVVTIVCLDLGYT) are cleaved as a signal peptide. 4 disulfides stabilise this stretch: C24–C43, C38–C60, C62–C73, and C74–C79.

It belongs to the three-finger toxin family. Short-chain subfamily. Type I alpha-neurotoxin sub-subfamily. As to expression, expressed by the venom gland.

Its subcellular location is the secreted. Binds to muscle nicotinic acetylcholine receptor (nAChR) and inhibit acetylcholine from binding to the receptor, thereby impairing neuromuscular transmission. This Tropidechis carinatus (Australian rough-scaled snake) protein is Short neurotoxin 1.